Reading from the N-terminus, the 432-residue chain is Adenylosuccinate synthetase (432 aa).

Residues 13 to 19 (GDEGKGK) and 41 to 43 (GHT) each bind GTP. Catalysis depends on Asp14, which acts as the Proton acceptor. Mg(2+) contacts are provided by Asp14 and Gly41. IMP-binding positions include 14–17 (DEGK), 39–42 (NAGH), Thr130, Arg144, Gln225, Thr240, and Arg304. His42 (proton donor) is an active-site residue. Residue 300-306 (ATTGRKR) coordinates substrate. GTP is bound by residues Arg306, 332 to 334 (KLD), and 415 to 417 (STG).

This sequence belongs to the adenylosuccinate synthetase family. In terms of assembly, homodimer. Mg(2+) is required as a cofactor.

Its subcellular location is the cytoplasm. It carries out the reaction IMP + L-aspartate + GTP = N(6)-(1,2-dicarboxyethyl)-AMP + GDP + phosphate + 2 H(+). The protein operates within purine metabolism; AMP biosynthesis via de novo pathway; AMP from IMP: step 1/2. Its function is as follows. Plays an important role in the de novo pathway of purine nucleotide biosynthesis. Catalyzes the first committed step in the biosynthesis of AMP from IMP. The polypeptide is Adenylosuccinate synthetase (Vibrio cholerae serotype O1 (strain ATCC 39541 / Classical Ogawa 395 / O395)).